A 490-amino-acid chain; its full sequence is Probable cytosol aminopeptidase (490 aa).

The Mn(2+) site is built by K262 and D267. The active site involves K274. Residues D285, D344, and E346 each contribute to the Mn(2+) site. R348 is an active-site residue.

Belongs to the peptidase M17 family. Requires Mn(2+) as cofactor.

It is found in the cytoplasm. It catalyses the reaction Release of an N-terminal amino acid, Xaa-|-Yaa-, in which Xaa is preferably Leu, but may be other amino acids including Pro although not Arg or Lys, and Yaa may be Pro. Amino acid amides and methyl esters are also readily hydrolyzed, but rates on arylamides are exceedingly low.. The catalysed reaction is Release of an N-terminal amino acid, preferentially leucine, but not glutamic or aspartic acids.. Functionally, presumably involved in the processing and regular turnover of intracellular proteins. Catalyzes the removal of unsubstituted N-terminal amino acids from various peptides. In Mannheimia succiniciproducens (strain KCTC 0769BP / MBEL55E), this protein is Probable cytosol aminopeptidase.